We begin with the raw amino-acid sequence, 297 residues long: UDP-N-acetylenolpyruvoylglucosamine reductase (297 aa).

The region spanning 26–191 (QTGGPAEYLA…IAATFALKAG (166 aa)) is the FAD-binding PCMH-type domain. R170 is an active-site residue. The active-site Proton donor is the S220. E290 is an active-site residue.

This sequence belongs to the MurB family. It depends on FAD as a cofactor.

The protein resides in the cytoplasm. It catalyses the reaction UDP-N-acetyl-alpha-D-muramate + NADP(+) = UDP-N-acetyl-3-O-(1-carboxyvinyl)-alpha-D-glucosamine + NADPH + H(+). Its pathway is cell wall biogenesis; peptidoglycan biosynthesis. Cell wall formation. The polypeptide is UDP-N-acetylenolpyruvoylglucosamine reductase (Lactobacillus delbrueckii subsp. bulgaricus (strain ATCC 11842 / DSM 20081 / BCRC 10696 / JCM 1002 / NBRC 13953 / NCIMB 11778 / NCTC 12712 / WDCM 00102 / Lb 14)).